Reading from the N-terminus, the 293-residue chain is MILPKQYCCTHSPSCQCTKGHLNEDVLLLVFQHLNWNPKLVATLSCVCRWFDDFAKRVLWKEFCKTRAPKMMLDLQSSGSHCIDGNWRALGKLLIYCSGCTQGGLFNSSVQIPGHFVYRTRFSRTLGRSLLPPQCRTDVLYVCDPCEHLDQGEEGDVGLFRGIFKSFPTSKVRKVIINKAVPFHPSEVCPYCKAKLWSMLQAKIIPQSACIRLEAYEDCIEYFVCLNGHLLGICTLAPLSDSEDAIPSEDNNHTEKKQDNGFPRENVLKRRNSLLGGSENGPPPQKRLTNPNQ.

The 53-residue stretch at 16-68 folds into the F-box domain; that stretch reads QCTKGHLNEDVLLLVFQHLNWNPKLVATLSCVCRWFDDFAKRVLWKEFCKTRA. Residues 245–293 form a disordered region; that stretch reads AIPSEDNNHTEKKQDNGFPRENVLKRRNSLLGGSENGPPPQKRLTNPNQ. A compositionally biased stretch (basic and acidic residues) spans 250–259; the sequence is DNNHTEKKQD.

The protein is EID1-like F-box protein 1 (EDL1) of Arabidopsis thaliana (Mouse-ear cress).